Here is a 469-residue protein sequence, read N- to C-terminus: 3-isopropylmalate dehydratase large subunit (469 aa).

[4Fe-4S] cluster-binding residues include C350, C410, and C413.

This sequence belongs to the aconitase/IPM isomerase family. LeuC type 1 subfamily. Heterodimer of LeuC and LeuD. It depends on [4Fe-4S] cluster as a cofactor.

The enzyme catalyses (2R,3S)-3-isopropylmalate = (2S)-2-isopropylmalate. The protein operates within amino-acid biosynthesis; L-leucine biosynthesis; L-leucine from 3-methyl-2-oxobutanoate: step 2/4. Its function is as follows. Catalyzes the isomerization between 2-isopropylmalate and 3-isopropylmalate, via the formation of 2-isopropylmaleate. The polypeptide is 3-isopropylmalate dehydratase large subunit (Sinorhizobium medicae (strain WSM419) (Ensifer medicae)).